Here is a 56-residue protein sequence, read N- to C-terminus: Arcadin-3 (56 aa).

The protein localises to the cytoplasm. It is found in the cytoskeleton. Its function is as follows. Part of an actin-like archaeal cytoskeleton. The sequence is that of Arcadin-3 from Pyrobaculum calidifontis (strain DSM 21063 / JCM 11548 / VA1).